The chain runs to 166 residues: MEAAQDHGPGLCCKPGGRLDMSHGFVHHIRRNQLDRDDYDKKVKQAAKEKARRRHTPAPTRPRKPDLQVYLPRHRDGSTHPVNPDCEEASESSSSGSSELEPPGRQLFCLDYEADSGEVTSVIVYQDDDPGRVSEAVSAHTPLDPAMREALRSRIQEELAKRQSRH.

Residues 32–49 are compositionally biased toward basic and acidic residues; it reads NQLDRDDYDKKVKQAAKE. A disordered region spans residues 32 to 107; the sequence is NQLDRDDYDK…SELEPPGRQL (76 aa). Over residues 91–101 the composition is skewed to low complexity; sequence ESSSSGSSELE.

Belongs to the UPF0561 family.

The polypeptide is UPF0561 protein C2orf68 homolog (Mus musculus (Mouse)).